We begin with the raw amino-acid sequence, 431 residues long: Adenylosuccinate synthetase (431 aa).

GTP contacts are provided by residues 13–19 and 41–43; these read GDEGKGK and GHT. Asp-14 (proton acceptor) is an active-site residue. Mg(2+) contacts are provided by Asp-14 and Gly-41. IMP is bound by residues 14–17, 39–42, Thr-130, Arg-144, Gln-225, Thr-240, and Arg-304; these read DEGK and NAGH. His-42 functions as the Proton donor in the catalytic mechanism. 300–306 serves as a coordination point for substrate; sequence ATTGRKR. Residues Arg-306, 332 to 334, and 415 to 417 each bind GTP; these read KLD and STG.

This sequence belongs to the adenylosuccinate synthetase family. In terms of assembly, homodimer. The cofactor is Mg(2+).

It localises to the cytoplasm. It carries out the reaction IMP + L-aspartate + GTP = N(6)-(1,2-dicarboxyethyl)-AMP + GDP + phosphate + 2 H(+). It participates in purine metabolism; AMP biosynthesis via de novo pathway; AMP from IMP: step 1/2. Its function is as follows. Plays an important role in the de novo pathway of purine nucleotide biosynthesis. Catalyzes the first committed step in the biosynthesis of AMP from IMP. This Shewanella frigidimarina (strain NCIMB 400) protein is Adenylosuccinate synthetase.